We begin with the raw amino-acid sequence, 473 residues long: Aspartyl/glutamyl-tRNA(Asn/Gln) amidotransferase subunit B (473 aa).

This sequence belongs to the GatB/GatE family. GatB subfamily. In terms of assembly, heterotrimer of A, B and C subunits.

It carries out the reaction L-glutamyl-tRNA(Gln) + L-glutamine + ATP + H2O = L-glutaminyl-tRNA(Gln) + L-glutamate + ADP + phosphate + H(+). The catalysed reaction is L-aspartyl-tRNA(Asn) + L-glutamine + ATP + H2O = L-asparaginyl-tRNA(Asn) + L-glutamate + ADP + phosphate + 2 H(+). In terms of biological role, allows the formation of correctly charged Asn-tRNA(Asn) or Gln-tRNA(Gln) through the transamidation of misacylated Asp-tRNA(Asn) or Glu-tRNA(Gln) in organisms which lack either or both of asparaginyl-tRNA or glutaminyl-tRNA synthetases. The reaction takes place in the presence of glutamine and ATP through an activated phospho-Asp-tRNA(Asn) or phospho-Glu-tRNA(Gln). The protein is Aspartyl/glutamyl-tRNA(Asn/Gln) amidotransferase subunit B of Wolbachia sp. subsp. Drosophila simulans (strain wRi).